A 392-amino-acid polypeptide reads, in one-letter code: Caveolae-associated protein 1 (392 aa).

Position 1 is an N-acetylmethionine (M1). Positions 1 to 10 (MEDVTLHIVE) are enriched in basic and acidic residues. Residues 1 to 45 (MEDVTLHIVERPYSGFPDASSEGPEPTQGEARATEEPSGTGSDEL) form a disordered region. The segment at 1-100 (MEDVTLHIVE…IQGELSKLGK (100 aa)) is required for homotrimerization and for interaction with CAVIN2 and CAVIN3. Phosphoserine is present on residues S21 and S38. A Phosphothreonine modification is found at T40. Phosphoserine is present on residues S42 and S48. A nuclear export signal region spans residues 54–64 (VLVLSLLDKII). The tract at residues 55 to 77 (LVLSLLDKIIGAVDQIQLTQAQL) is leucine-zipper 1. Residue K118 forms a Glycyl lysine isopeptide (Lys-Gly) (interchain with G-Cter in SUMO2) linkage. S120 is modified (phosphoserine). A Glycyl lysine isopeptide (Lys-Gly) (interchain with G-Cter in SUMO2) cross-link involves residue K124. A nuclear localization signal region spans residues 138 to 154 (KKLEVNEAELLRRRNFK). Y158 is modified (phosphotyrosine). K163 participates in a covalent cross-link: Glycyl lysine isopeptide (Lys-Gly) (interchain with G-Cter in SUMO1); alternate. A Glycyl lysine isopeptide (Lys-Gly) (interchain with G-Cter in SUMO2); alternate cross-link involves residue K163. Residue K167 forms a Glycyl lysine isopeptide (Lys-Gly) (interchain with G-Cter in SUMO2) linkage. Positions 168–188 (LSVSKSLKESEALPEKEGDEL) are leucine-zipper 2. Phosphoserine occurs at positions 169 and 171. A Glycyl lysine isopeptide (Lys-Gly) (interchain with G-Cter in SUMO2) cross-link involves residue K172. S173 and S177 each carry phosphoserine. Basic and acidic residues predominate over residues 173–183 (SLKESEALPEK). Residues 173–197 (SLKESEALPEKEGDELGEGERPEDD) are disordered. Over residues 184-197 (EGDELGEGERPEDD) the composition is skewed to acidic residues. A Phosphothreonine modification is found at T198. The stretch at 201 to 284 (IELSSDEAVE…RMNKLGTRLV (84 aa)) forms a coiled coil. S204 and S205 each carry phosphoserine. A nuclear localization signal region spans residues 235 to 251 (KKAFSKEKMEKTKVRTR). Residues 259–299 (LKTKENLEKTRHTLEKRMNKLGTRLVPVERREKLKTSRDKL) are leucine-zipper 3. Phosphoserine is present on S302. The residue at position 304 (T304) is a Phosphothreonine. Y310 carries the phosphotyrosine modification. K328 is covalently cross-linked (Glycyl lysine isopeptide (Lys-Gly) (interchain with G-Cter in SUMO2)). Residues 347–367 (GPEDDEVGAERGEATDLLRGS) are disordered. 5 positions are modified to phosphoserine: S367, S368, S381, S389, and S391.

Belongs to the CAVIN family. In terms of assembly, component of the CAVIN complex composed of CAVIN1, CAVIN2, CAVIN3 and CAVIN4. Homotrimer. Interacts with LIPE in the adipocyte cytoplasm. Interacts with RNA polymerase I subunit POLR1A/RPA1. Interacts with TTF1. Binds the 3' end of pre-rRNA. Interacts with transcription factor ZNF148. Interacts with CAV1, CAVIN2 and CAVIN3. Interacts with CAVIN4. Post-translationally, phosphorylated. Present in active and inactive forms. Changes in phosphorylation pattern may alter activity. Phosphorylation at Tyr-158 is essential for its function in the regulation of the ribosomal transcriptional activity. Monoubiquitinated. As to expression, expressed in the heart, stomach, adipose tissue and lung (at protein level). Expressed in testis, kidney, muscle, liver, spleen and brain.

Its subcellular location is the membrane. It localises to the caveola. The protein localises to the cell membrane. It is found in the microsome. The protein resides in the endoplasmic reticulum. Its subcellular location is the cytoplasm. It localises to the cytosol. The protein localises to the mitochondrion. It is found in the nucleus. Plays an important role in caveolae formation and organization. Essential for the formation of caveolae in all tissues. Core component of the CAVIN complex which is essential for recruitment of the complex to the caveolae in presence of calveolin-1 (CAV1). Essential for normal oligomerization of CAV1. Promotes ribosomal transcriptional activity in response to metabolic challenges in the adipocytes and plays an important role in the formation of the ribosomal transcriptional loop. Dissociates transcription complexes paused by DNA-bound TTF1, thereby releasing both RNA polymerase I and pre-RNA from the template. The caveolae biogenesis pathway is required for the secretion of proteins such as GASK1A. This is Caveolae-associated protein 1 (Cavin1) from Mus musculus (Mouse).